The sequence spans 283 residues: MTEFTTLLQQGNAWFFIPSAILLGALHGLEPGHSKTMMAAFIIAIKGTIKQAVMLGLAATISHTAVVWLIAFGGMVISKRFTAQSAEPWLQLISAVIIISTAFWMFWRTWRGERNWLENMHEHHHHDHEHHQDHDHDHDHDHDHEHHHHHEHGDNEEYQDAHARAHANDIKRRFDGREVTNWQILLFGLTGGLIPCPAAITVLLICIQLKALTLGATLVVSFSIGLALTLVTVGVGAAISVQQVAKRWSGFNTLAKRAPYFSSLLIGLVGVYMGVHGFMGIMR.

The Periplasmic segment spans residues 1-12; sequence MTEFTTLLQQGN. A helical membrane pass occupies residues 13–33; the sequence is AWFFIPSAILLGALHGLEPGH. The Cytoplasmic portion of the chain corresponds to 34–56; sequence SKTMMAAFIIAIKGTIKQAVMLG. Residues 57–77 traverse the membrane as a helical segment; sequence LAATISHTAVVWLIAFGGMVI. Residues 78–86 lie on the Periplasmic side of the membrane; the sequence is SKRFTAQSA. A helical membrane pass occupies residues 87 to 107; that stretch reads EPWLQLISAVIIISTAFWMFW. Over 108–184 the chain is Cytoplasmic; that stretch reads RTWRGERNWL…DGREVTNWQI (77 aa). The interval 127 to 162 is disordered; sequence DHEHHQDHDHDHDHDHDHEHHHHHEHGDNEEYQDAH. 2 stretches are compositionally biased toward basic and acidic residues: residues 129–144 and 151–162; these read EHHQDHDHDHDHDHDH and EHGDNEEYQDAH. Residues 185-205 form a helical membrane-spanning segment; sequence LLFGLTGGLIPCPAAITVLLI. Over 206 to 218 the chain is Periplasmic; it reads CIQLKALTLGATL. The chain crosses the membrane as a helical span at residues 219–239; that stretch reads VVSFSIGLALTLVTVGVGAAI. Topologically, residues 240–260 are cytoplasmic; it reads SVQQVAKRWSGFNTLAKRAPY. Residues 261–281 traverse the membrane as a helical segment; it reads FSSLLIGLVGVYMGVHGFMGI. At 282 to 283 the chain is on the periplasmic side; the sequence is MR.

This sequence belongs to the NiCoT transporter (TC 2.A.52) family. RcnA subfamily.

The protein resides in the cell inner membrane. Efflux system for nickel and cobalt. This Escherichia coli O157:H7 protein is Nickel/cobalt efflux system RcnA (rcnA).